We begin with the raw amino-acid sequence, 119 residues long: Beta-2-microglobulin (119 aa).

The N-terminal stretch at 1–20 (MARFVAVALLVLLSLSGLET) is a signal peptide. Positions 25–114 (PKIQVYSRHP…VTFSTPKTVK (90 aa)) constitute an Ig-like C1-type domain. Cysteine 45 and cysteine 100 are oxidised to a cystine.

This sequence belongs to the beta-2-microglobulin family. As to quaternary structure, heterodimer of an alpha chain and a beta chain. Beta-2-microglobulin is the beta-chain of major histocompatibility complex class I molecules.

The protein localises to the secreted. Functionally, component of the class I major histocompatibility complex (MHC). Involved in the presentation of peptide antigens to the immune system. The sequence is that of Beta-2-microglobulin (B2M) from Callicebus personatus personatus (Masked titi).